A 1330-amino-acid polypeptide reads, in one-letter code: ESX-3 secretion system protein EccC3 (1330 aa).

Transmembrane regions (helical) follow at residues 43–63 (LPYL…ATGM) and 65–85 (VISP…TALY). FtsK domains are found at residues 456–662 (GEPL…SVSR), 811–1000 (RDPL…RDSN), and 1090–1280 (LAPV…ADSG). Residues 479-486 (GMTGSGKS), 829-836 (GGPKSGKS), and 1107-1114 (GDARSGKT) contribute to the ATP site.

As to quaternary structure, part of the ESX-3 / type VII secretion system (T7SS), which is composed of cytosolic and membrane components. The ESX-3 membrane complex is composed of EccB3, EccC3, EccD3 and EccE3.

It localises to the cell inner membrane. Functionally, part of the ESX-3 specialized secretion system, which is important for iron and zinc uptake or homeostasis. The chain is ESX-3 secretion system protein EccC3 from Mycobacterium tuberculosis (strain CDC 1551 / Oshkosh).